Reading from the N-terminus, the 312-residue chain is Serine/threonine-protein phosphatase PP2A catalytic subunit (312 aa).

The Mn(2+) site is built by Asp-60, His-62, Asp-88, and Asn-120. The active-site Proton donor is the His-121. Residues His-170 and His-244 each contribute to the Mn(2+) site.

The protein belongs to the PPP phosphatase family. PP-2A subfamily. It depends on Mn(2+) as a cofactor.

It localises to the cytoplasm. The catalysed reaction is O-phospho-L-seryl-[protein] + H2O = L-seryl-[protein] + phosphate. The enzyme catalyses O-phospho-L-threonyl-[protein] + H2O = L-threonyl-[protein] + phosphate. In Nicotiana tabacum (Common tobacco), this protein is Serine/threonine-protein phosphatase PP2A catalytic subunit.